The following is a 347-amino-acid chain: D-alanine--D-alanine ligase (347 aa).

The ATP-grasp domain maps to 131–333 (KRVLESAGIA…YPDLIERLVE (203 aa)). An ATP-binding site is contributed by 161–216 (EEELTYPVFTKPSNMGSSVGISKSENQEELRQALKLAFQYDSRVLVEQGVNAREIE). Positions 287, 300, and 302 each coordinate Mg(2+).

The protein belongs to the D-alanine--D-alanine ligase family. Requires Mg(2+) as cofactor. It depends on Mn(2+) as a cofactor.

It is found in the cytoplasm. It carries out the reaction 2 D-alanine + ATP = D-alanyl-D-alanine + ADP + phosphate + H(+). It functions in the pathway cell wall biogenesis; peptidoglycan biosynthesis. Functionally, cell wall formation. This Streptococcus pneumoniae (strain Hungary19A-6) protein is D-alanine--D-alanine ligase.